The following is a 330-amino-acid chain: MKHWYDLITEAQSVEKIEEIRISLFGKKGVLAAEFARMKEASDEEKSKIAQELNIHKTTLMNELVQRKITLQTQELQEHMKSEAIDVTMFSSSSESGALHPVMQTMDRIVEYFSSMNFTVKTGTMVEDDFNNFEALNLPKYHPARDMQDTFYFKDEMLLRTHTSPVQIRTMMSSKPPIRMIAPGAVFRRDYDITHTPMFHQVEGLLVDKEGAVSFANLKFILEDFLKYMFGDVEVRFRPSFFPFTEPSAEVDISCVFCKGSGCRVCSKTGWLEVLGCGIVDPNVFEAVKYQNVSGYAFGLGVERFAMLIHQIGDLRSLFEGDIKLLEQFR.

E246 provides a ligand contact to Mg(2+).

This sequence belongs to the class-II aminoacyl-tRNA synthetase family. Phe-tRNA synthetase alpha subunit type 1 subfamily. Tetramer of two alpha and two beta subunits. The cofactor is Mg(2+).

The protein resides in the cytoplasm. It catalyses the reaction tRNA(Phe) + L-phenylalanine + ATP = L-phenylalanyl-tRNA(Phe) + AMP + diphosphate + H(+). The chain is Phenylalanine--tRNA ligase alpha subunit from Sulfurimonas denitrificans (strain ATCC 33889 / DSM 1251) (Thiomicrospira denitrificans (strain ATCC 33889 / DSM 1251)).